A 104-amino-acid chain; its full sequence is Large ribosomal subunit protein uL24 (104 aa).

Belongs to the universal ribosomal protein uL24 family. As to quaternary structure, part of the 50S ribosomal subunit.

One of two assembly initiator proteins, it binds directly to the 5'-end of the 23S rRNA, where it nucleates assembly of the 50S subunit. Its function is as follows. One of the proteins that surrounds the polypeptide exit tunnel on the outside of the subunit. The chain is Large ribosomal subunit protein uL24 from Shewanella denitrificans (strain OS217 / ATCC BAA-1090 / DSM 15013).